The primary structure comprises 755 residues: von Willebrand factor A domain-containing protein 2 (755 aa).

The first 23 residues, 1–23 (MPPFLLLEAVCVFLFSRVPPSLP), serve as a signal peptide directing secretion. The region spanning 51–222 (DIMFLLDGSN…DATNGLFSTL (172 aa)) is the VWFA 1 domain. N147 carries an N-linked (GlcNAc...) asparagine glycan. Positions 296–333 (PGPCDSQPCQNGGTCVPEGLDGYQCLCPLAFGGEANCA) constitute an EGF-like 1 domain. 3 cysteine pairs are disulfide-bonded: C299-C310, C304-C320, and C322-C332. VWFA domains lie at 343–517 (DLLF…QGKL) and 531–705 (DLVF…IEWL). The 37-residue stretch at 712–748 (PVNLCKPSPCMNEGSCVLQNGSYRCKCRDGWEGPHCE) folds into the EGF-like 2 domain. 3 cysteine pairs are disulfide-bonded: C716/C727, C721/C736, and C738/C747.

In terms of assembly, forms monomers and multimers. A 55 kDa form is produced by proteolytic cleavage. Expression is generally absent in normal colon and other normal body tissues, but it is induced an average of 78-fold in Stage II, III, and IV colon cancers, as well as in colon adenomas and colon cancer cell lines.

It is found in the secreted. This Homo sapiens (Human) protein is von Willebrand factor A domain-containing protein 2 (VWA2).